The chain runs to 390 residues: Transaldolase (390 aa).

Catalysis depends on lysine 135, which acts as the Schiff-base intermediate with substrate. EF-hand domains follow at residues 329–364 (AFCHVVQEIFMLNDLDGDGCITREEWLGSDAVFDAL) and 365–388 (DHDHDGRLLQEDVRSGLGAALALT). Ca(2+) is bound by residues aspartate 342, aspartate 344, aspartate 346, cysteine 348, glutamate 353, aspartate 365, aspartate 367, aspartate 369, arginine 371, and aspartate 376.

Belongs to the transaldolase family. Type 1 subfamily.

The protein resides in the cytoplasm. The catalysed reaction is D-sedoheptulose 7-phosphate + D-glyceraldehyde 3-phosphate = D-erythrose 4-phosphate + beta-D-fructose 6-phosphate. Its pathway is carbohydrate degradation; pentose phosphate pathway; D-glyceraldehyde 3-phosphate and beta-D-fructose 6-phosphate from D-ribose 5-phosphate and D-xylulose 5-phosphate (non-oxidative stage): step 2/3. Transaldolase is important for the balance of metabolites in the pentose-phosphate pathway. This chain is Transaldolase, found in Prochlorococcus marinus (strain MIT 9313).